Consider the following 296-residue polypeptide: Bifunctional protein FolD (296 aa).

NADP(+)-binding positions include glycine 170 to serine 172 and serine 195.

This sequence belongs to the tetrahydrofolate dehydrogenase/cyclohydrolase family. In terms of assembly, homodimer.

The catalysed reaction is (6R)-5,10-methylene-5,6,7,8-tetrahydrofolate + NADP(+) = (6R)-5,10-methenyltetrahydrofolate + NADPH. It carries out the reaction (6R)-5,10-methenyltetrahydrofolate + H2O = (6R)-10-formyltetrahydrofolate + H(+). It participates in one-carbon metabolism; tetrahydrofolate interconversion. Its function is as follows. Catalyzes the oxidation of 5,10-methylenetetrahydrofolate to 5,10-methenyltetrahydrofolate and then the hydrolysis of 5,10-methenyltetrahydrofolate to 10-formyltetrahydrofolate. This Rhodospirillum rubrum (strain ATCC 11170 / ATH 1.1.1 / DSM 467 / LMG 4362 / NCIMB 8255 / S1) protein is Bifunctional protein FolD.